Consider the following 193-residue polypeptide: Potassium-transporting ATPase KdpC subunit (193 aa).

Residues 14 to 34 (ITFTFLVLCGLVYPLIVTGIA) form a helical membrane-spanning segment.

Belongs to the KdpC family. As to quaternary structure, the system is composed of three essential subunits: KdpA, KdpB and KdpC.

It localises to the cell membrane. Functionally, part of the high-affinity ATP-driven potassium transport (or Kdp) system, which catalyzes the hydrolysis of ATP coupled with the electrogenic transport of potassium into the cytoplasm. This subunit acts as a catalytic chaperone that increases the ATP-binding affinity of the ATP-hydrolyzing subunit KdpB by the formation of a transient KdpB/KdpC/ATP ternary complex. In Bacillus cereus (strain G9842), this protein is Potassium-transporting ATPase KdpC subunit.